Reading from the N-terminus, the 204-residue chain is Pneumococcal vaccine antigen A (204 aa).

It localises to the cell surface. This chain is Pneumococcal vaccine antigen A (pvaA), found in Streptococcus pneumoniae serotype 4 (strain ATCC BAA-334 / TIGR4).